A 398-amino-acid chain; its full sequence is Nocardicin C N-oxygenase (398 aa).

The segment at 63–90 is disordered; sequence RARAAGREETPRVTPEAAPAGSMLSMDP. Residues His93, Arg97, Arg289, His345, and Cys347 each coordinate heme.

It belongs to the cytochrome P450 family. The cofactor is heme.

The catalysed reaction is nocardicin C + 4 reduced [2Fe-2S]-[ferredoxin] + 2 O2 + 2 H(+) = nocardicin A + 4 oxidized [2Fe-2S]-[ferredoxin] + 3 H2O. The protein operates within antibiotic biosynthesis. Functionally, involved in the biosynthesis of the beta-lactam antibiotic nocardicin A. Catalyzes the conversion of nocardicin C to nocardicin A. Cannot use nocardicin G. This is Nocardicin C N-oxygenase from Nocardia uniformis subsp. tsuyamanensis.